The primary structure comprises 310 residues: Tryptophan 2,3-dioxygenase (310 aa).

The interval 1 to 36 (MQPPGEDAPAGCPFSGARAAHSAPAAPAAHEASHVP) is disordered. Residues 15 to 36 (SGARAAHSAPAAPAAHEASHVP) show a composition bias toward low complexity. Substrate is bound by residues 79-83 (FIIQH), tyrosine 141, and arginine 145. Position 268 (histidine 268) interacts with heme. Substrate is bound at residue threonine 282.

Belongs to the tryptophan 2,3-dioxygenase family. As to quaternary structure, homotetramer. It depends on heme as a cofactor.

The catalysed reaction is L-tryptophan + O2 = N-formyl-L-kynurenine. It functions in the pathway amino-acid degradation; L-tryptophan degradation via kynurenine pathway; L-kynurenine from L-tryptophan: step 1/2. Its function is as follows. Heme-dependent dioxygenase that catalyzes the oxidative cleavage of the L-tryptophan (L-Trp) pyrrole ring and converts L-tryptophan to N-formyl-L-kynurenine. Catalyzes the oxidative cleavage of the indole moiety. The sequence is that of Tryptophan 2,3-dioxygenase from Burkholderia lata (strain ATCC 17760 / DSM 23089 / LMG 22485 / NCIMB 9086 / R18194 / 383).